The primary structure comprises 761 residues: Protein spire homolog 1 (761 aa).

Disordered regions lie at residues 1-23 and 160-183; these read MTDGGMLISPSALQDPGDGARPE and DCPDEGYEATEEEDEGEEENAEVS. Residues 36 to 223 enclose the KIND domain; it reads LCLEEILTLY…RALYAETKEL (188 aa). Acidic residues predominate over residues 160–180; sequence DCPDEGYEATEEEDEGEEENA. Positions 218–246 form a coiled coil; the sequence is AETKELRTFLEKIKSAKENLRKMEGETEE. WH2 domains are found at residues 295-313 and 359-376; these read PYEMLMDDIRSKRYKLRKV and LHERILEEIRSERKLRPV. 2 disordered regions span residues 375 to 406 and 419 to 539; these read PVSPDMIRRSRLGAGKSISTPQDLFRSSDIPD and ANGT…KSLA. Low complexity predominate over residues 469–480; that stretch reads SSSSISTSLVED. A compositionally biased stretch (basic and acidic residues) spans 504-520; the sequence is PDKRIAPQRRHSIEKEA. The segment at 557–577 is spir-box; the sequence is LTLTVEEVMHIRQVLVKAELE. Disordered regions lie at residues 630–694 and 728–761; these read PSKP…DELE and STKRARLHRRTHSVYSSSTSSSNYKPTERTIKEV. Positions 636 to 647 are enriched in low complexity; that stretch reads SLPISSLGPSIL. Over residues 682-693 the composition is skewed to basic and acidic residues; that stretch reads KHGDRSSSKDEL. Over residues 728–739 the composition is skewed to basic residues; it reads STKRARLHRRTH. Residues 740-749 show a composition bias toward low complexity; it reads SVYSSSTSSS.

Belongs to the spire family.

It localises to the cytoplasm. The protein localises to the cytoskeleton. Its subcellular location is the cytosol. The protein resides in the cleavage furrow. It is found in the perinuclear region. It localises to the cell membrane. The protein localises to the cytoplasmic vesicle membrane. Acts as an actin nucleation factor, remains associated with the slow-growing pointed end of the new filament. Involved in intracellular vesicle transport along actin fibers, providing a novel link between actin cytoskeleton dynamics and intracellular transport. Required for asymmetric spindle positioning and asymmetric cell division during meiosis. Required for normal formation of the cleavage furrow and for polar body extrusion during female germ cell meiosis. Also acts in the nucleus: together with FMN2, promotes assembly of nuclear actin filaments in response to DNA damage in order to facilitate movement of chromatin and repair factors after DNA damage. In addition, promotes innate immune signaling downstream of dsRNA sensing. Mechanistically, contributes to IRF3 phosphorylation and activation downstream of MAVS and upstream of TBK1. This chain is Protein spire homolog 1, found in Danio rerio (Zebrafish).